The primary structure comprises 354 residues: Carbamoyl phosphate synthase small chain (354 aa).

Positions 1–167 are CPSase; sequence MEAVLILEDG…KEPKIHKTAN (167 aa). L-glutamine-binding residues include Ser-45, Gly-219, and Gly-221. Residues 171–354 form the Glutamine amidotransferase type-1 domain; sequence RCVLIDCGVK…DEMIKLKDRK (184 aa). The active-site Nucleophile is Cys-246. Residues Leu-247, Gln-250, Asn-288, Gly-290, and Phe-291 each contribute to the L-glutamine site. Residues His-330 and Glu-332 contribute to the active site.

Belongs to the CarA family. In terms of assembly, composed of two chains; the small (or glutamine) chain promotes the hydrolysis of glutamine to ammonia, which is used by the large (or ammonia) chain to synthesize carbamoyl phosphate. Tetramer of heterodimers (alpha,beta)4.

It catalyses the reaction hydrogencarbonate + L-glutamine + 2 ATP + H2O = carbamoyl phosphate + L-glutamate + 2 ADP + phosphate + 2 H(+). It carries out the reaction L-glutamine + H2O = L-glutamate + NH4(+). Its pathway is amino-acid biosynthesis; L-arginine biosynthesis; carbamoyl phosphate from bicarbonate: step 1/1. It functions in the pathway pyrimidine metabolism; UMP biosynthesis via de novo pathway; (S)-dihydroorotate from bicarbonate: step 1/3. Functionally, small subunit of the glutamine-dependent carbamoyl phosphate synthetase (CPSase). CPSase catalyzes the formation of carbamoyl phosphate from the ammonia moiety of glutamine, carbonate, and phosphate donated by ATP, constituting the first step of 2 biosynthetic pathways, one leading to arginine and/or urea and the other to pyrimidine nucleotides. The small subunit (glutamine amidotransferase) binds and cleaves glutamine to supply the large subunit with the substrate ammonia. This Methanocaldococcus jannaschii (strain ATCC 43067 / DSM 2661 / JAL-1 / JCM 10045 / NBRC 100440) (Methanococcus jannaschii) protein is Carbamoyl phosphate synthase small chain.